The sequence spans 366 residues: Flagellar P-ring protein (366 aa).

The first 27 residues, 1-27 (MKSKYSIFCMFLLRGFIFLGTVFSLNS), serve as a signal peptide directing secretion.

It belongs to the FlgI family. In terms of assembly, the basal body constitutes a major portion of the flagellar organelle and consists of four rings (L,P,S, and M) mounted on a central rod.

The protein resides in the periplasm. It is found in the bacterial flagellum basal body. Its function is as follows. Assembles around the rod to form the L-ring and probably protects the motor/basal body from shearing forces during rotation. The polypeptide is Flagellar P-ring protein (Leptospira interrogans serogroup Icterohaemorrhagiae serovar copenhageni (strain Fiocruz L1-130)).